The primary structure comprises 113 residues: Protein ORF3 (113 aa).

Hydrophobic regions lie at residues 1-21 and 32-52; these read MGSPCALGLFCCCSSCFCLCC and AVVGGATAVPAVVSGVTGLIL. Positions 27–67 are interaction with host HPX; it reads ASRLAAVVGGATAVPAVVSGVTGLILSPSPSPIFIQPTPSL. The segment at 47–71 is interaction with the capsid protein; it reads VTGLILSPSPSPIFIQPTPSLPMSF. Position 70 is a phosphoserine; by host (serine 70). The tract at residues 71–113 is homodimerization, and interaction with host AMBP/bikunin; that stretch reads FHNPGLELALDSRPAPLAPLGVTSPSAPPLPPVVDLPQLGLRR. The segment at 89–113 is disordered; it reads PLGVTSPSAPPLPPVVDLPQLGLRR. The interaction with host SRC, HCK, FYN, PIK3R3 and GRB2 stretch occupies residues 94–103; sequence SPSAPPLPPV. Positions 95 to 98 match the PTAP/PSAP motif motif; sequence PSAP.

It belongs to the hepevirus ORF3 protein family. Forms homooligomers. Interacts with host SRC, HCK, FYN, PIK3R3 and GRB2 (via SH3 domain); binding does not activate the kinases. Interacts with host AMBP/bikunin and AMBP/alpha-1-microglobulin peptides. Interacts with host HPX/hemopexin. Interacts (when phosphorylated) with capsid protein ORF2. Interacts with host TSG101; this interaction plays a role in viral release from the host cell. Interacts with host SIRPA; this interaction down-regulates the phosphorylation of host IRF3. Palmitoylated in the N-terminus.

Its subcellular location is the host endoplasmic reticulum membrane. It localises to the host cytoplasm. The protein resides in the host cytoskeleton. The protein localises to the virion. It is found in the host cell membrane. Its function is as follows. Small multifunctional phosphoprotein involved in virion morphogenesis, egress and counteracting host innate immunity. Plays critical roles in the final steps of viral release by interacting with host TSG101, a member of the vacuolar protein-sorting pathway and using other cellular host proteins involved in vesicle formation pathway. Also acts as a viroporin and forms ion conductive pores allowing viral particle release. Impairs the generation of type I interferon by down-regulating host TLR3 and TLR7 as well as their downstream signaling pathways. Down-regulates the phosphorylation of host IRF3 via the interaction with host SIRP-alpha, thereby inhibiting IFN-I expression. Interacts with host microtubules. This is Protein ORF3 from Bandicota bengalensis (lesser bandicoot rat).